The chain runs to 713 residues: Ribosomal RNA large subunit methyltransferase K/L (713 aa).

Residues 43–154 (LLYRALLWSR…RDQVMLSLDL (112 aa)) enclose the THUMP domain.

The protein belongs to the methyltransferase superfamily. RlmKL family.

Its subcellular location is the cytoplasm. The enzyme catalyses guanosine(2445) in 23S rRNA + S-adenosyl-L-methionine = N(2)-methylguanosine(2445) in 23S rRNA + S-adenosyl-L-homocysteine + H(+). It catalyses the reaction guanosine(2069) in 23S rRNA + S-adenosyl-L-methionine = N(2)-methylguanosine(2069) in 23S rRNA + S-adenosyl-L-homocysteine + H(+). In terms of biological role, specifically methylates the guanine in position 2445 (m2G2445) and the guanine in position 2069 (m7G2069) of 23S rRNA. This is Ribosomal RNA large subunit methyltransferase K/L from Sodalis glossinidius (strain morsitans).